Reading from the N-terminus, the 88-residue chain is Small ribosomal subunit protein uS15 (88 aa).

Belongs to the universal ribosomal protein uS15 family. Part of the 30S ribosomal subunit. Forms a bridge to the 50S subunit in the 70S ribosome, contacting the 23S rRNA.

Its function is as follows. One of the primary rRNA binding proteins, it binds directly to 16S rRNA where it helps nucleate assembly of the platform of the 30S subunit by binding and bridging several RNA helices of the 16S rRNA. Functionally, forms an intersubunit bridge (bridge B4) with the 23S rRNA of the 50S subunit in the ribosome. This chain is Small ribosomal subunit protein uS15, found in Mesomycoplasma flocculare (Mycoplasma flocculare).